A 374-amino-acid polypeptide reads, in one-letter code: Chaperone protein DnaJ (374 aa).

The J domain occupies 5 to 70 (DYYEVLGISR…SKRAAYDQFG (66 aa)). The CR-type zinc-finger motif lies at 129 to 207 (GKTVKINIPG…CHGQGRVRQE (79 aa)). Residues Cys-142, Cys-145, Cys-159, Cys-162, Cys-181, Cys-184, Cys-195, and Cys-198 each coordinate Zn(2+). CXXCXGXG motif repeat units lie at residues 142–149 (CEACDGSG), 159–166 (CGTCQGMG), 181–188 (CPTCRGSG), and 195–202 (CKSCHGQG). Residues 216 to 238 (PGVDTGDRIRLSGEGEMGVDGGP) form a disordered region.

The protein belongs to the DnaJ family. In terms of assembly, homodimer. Requires Zn(2+) as cofactor.

The protein localises to the cytoplasm. Its function is as follows. Participates actively in the response to hyperosmotic and heat shock by preventing the aggregation of stress-denatured proteins and by disaggregating proteins, also in an autonomous, DnaK-independent fashion. Unfolded proteins bind initially to DnaJ; upon interaction with the DnaJ-bound protein, DnaK hydrolyzes its bound ATP, resulting in the formation of a stable complex. GrpE releases ADP from DnaK; ATP binding to DnaK triggers the release of the substrate protein, thus completing the reaction cycle. Several rounds of ATP-dependent interactions between DnaJ, DnaK and GrpE are required for fully efficient folding. Also involved, together with DnaK and GrpE, in the DNA replication of plasmids through activation of initiation proteins. The chain is Chaperone protein DnaJ from Marinobacter nauticus (strain ATCC 700491 / DSM 11845 / VT8) (Marinobacter aquaeolei).